A 354-amino-acid polypeptide reads, in one-letter code: uncharacterized protein (354 aa).

The tract at residues 96–130 is disordered; sequence QVCPASAPNGKRAMKIPKVKEPRGENSSKKSSADQ. A compositionally biased stretch (basic and acidic residues) spans 113-127; sequence KVKEPRGENSSKKSS.

This is an uncharacterized protein from Caenorhabditis elegans.